A 153-amino-acid polypeptide reads, in one-letter code: Melatonin receptor type 1A X2.0 (153 aa).

Topologically, residues 1–12 are cytoplasmic; sequence HSSWYNRLFSNS. A helical transmembrane segment spans residues 13 to 33; sequence GTICYVGLVWVLALGAILPNL. At 34–57 the chain is on the extracellular side; sequence FVGSLRCDPRIFSCTFAQYVSSYY. A helical membrane pass occupies residues 58 to 78; the sequence is TIAVVIFHFFLPIGVVSYCYL. The Cytoplasmic portion of the chain corresponds to 79 to 112; the sequence is RIWVLVLNIRHRVKPDRHLHHQTWPYNIHGFITM. The helical transmembrane segment at 113–133 threads the bilayer; the sequence is FVVFVLFAVCWGPLNIIGLTV. Residues 134-145 lie on the Extracellular side of the membrane; that stretch reads AIYPPLGDSIPQ. Residues 146 to 153 form a helical membrane-spanning segment; sequence WLFVASYF.

It belongs to the G-protein coupled receptor 1 family.

Its subcellular location is the cell membrane. In terms of biological role, high affinity receptor for melatonin. The activity of this receptor is mediated by pertussis toxin sensitive G proteins that inhibits adenylate cyclase activity. The sequence is that of Melatonin receptor type 1A X2.0 from Xenopus laevis (African clawed frog).